We begin with the raw amino-acid sequence, 119 residues long: Protein TusC (119 aa).

This sequence belongs to the DsrF/TusC family. In terms of assembly, heterohexamer, formed by a dimer of trimers. The hexameric TusBCD complex contains 2 copies each of TusB, TusC and TusD. The TusBCD complex interacts with TusE.

The protein resides in the cytoplasm. Part of a sulfur-relay system required for 2-thiolation of 5-methylaminomethyl-2-thiouridine (mnm(5)s(2)U) at tRNA wobble positions. The sequence is that of Protein TusC from Buchnera aphidicola subsp. Acyrthosiphon pisum (strain APS) (Acyrthosiphon pisum symbiotic bacterium).